Consider the following 307-residue polypeptide: Urease accessory protein UreD (307 aa).

This sequence belongs to the UreD family. UreD, UreF and UreG form a complex that acts as a GTP-hydrolysis-dependent molecular chaperone, activating the urease apoprotein by helping to assemble the nickel containing metallocenter of UreC. The UreE protein probably delivers the nickel.

It is found in the cytoplasm. Its function is as follows. Required for maturation of urease via the functional incorporation of the urease nickel metallocenter. This Prochlorococcus marinus (strain NATL1A) protein is Urease accessory protein UreD.